Reading from the N-terminus, the 227-residue chain is uncharacterized protein (227 aa).

The next 4 membrane-spanning stretches (helical) occupy residues 17 to 37 (VGIK…GVFS), 79 to 99 (GFLF…IISI), 112 to 132 (LMTP…LALI), and 181 to 201 (VAVF…ILVF).

The protein resides in the cell membrane. This is an uncharacterized protein from Escherichia coli (strain K12).